The chain runs to 227 residues: Ashwin (227 aa).

The span at 71–84 (LPRSRWGKRMEKSR) shows a compositional bias: basic and acidic residues. The disordered stretch occupies residues 71–227 (LPRSRWGKRM…KKKIQHITWP (157 aa)). Low complexity predominate over residues 88-98 (SSSSTHSSSTD). Residues 153–173 (GASTNCSSSNFSNRTPVSSSG) are compositionally biased toward polar residues. The segment covering 178-191 (SPSNHSNSSVHSNN) has biased composition (low complexity). A compositionally biased stretch (basic and acidic residues) spans 204 to 219 (GEPDTAKDIKSPETKK).

Belongs to the ashwin family.

It localises to the nucleus. In Danio rerio (Zebrafish), this protein is Ashwin.